The following is an 88-amino-acid chain: Small ribosomal subunit protein bS20 (88 aa).

A disordered region spans residues 1–27 (MANTPQAKKRARQNEKARKHNASMRSM). A compositionally biased stretch (basic residues) spans 7-22 (AKKRARQNEKARKHNA).

Belongs to the bacterial ribosomal protein bS20 family.

Binds directly to 16S ribosomal RNA. In Cellvibrio japonicus (strain Ueda107) (Pseudomonas fluorescens subsp. cellulosa), this protein is Small ribosomal subunit protein bS20.